The following is a 304-amino-acid chain: tRNA-5-methyluridine(54) 2-sulfurtransferase (304 aa).

Residues Cys-3, Cys-6, Cys-22, and His-25 each coordinate Zn(2+). The ATP site is built by Ala-53 and Ile-79. Residues Cys-131 and Cys-134 each contribute to the [4Fe-4S] cluster site. The ATP site is built by Arg-138 and Gly-157. Cys-224 is a binding site for [4Fe-4S] cluster. Zn(2+)-binding residues include Cys-274, Cys-277, Cys-286, and Cys-289.

The protein belongs to the TtcA family. TtuA subfamily. In terms of assembly, homodimer. [4Fe-4S] cluster is required as a cofactor. The cofactor is Mg(2+).

The catalysed reaction is 5-methyluridine(54) in tRNA + hydrogen sulfide + ATP = 5-methyl-2-thiouridine(54) in tRNA + AMP + diphosphate. The protein operates within tRNA modification. Its function is as follows. Catalyzes the ATP-dependent 2-thiolation of 5-methyluridine residue at position 54 in the T loop of tRNAs, leading to 5-methyl-2-thiouridine (m(5)s(2)U or s(2)T). This modification allows thermal stabilization of tRNAs in thermophilic microorganisms, and is required for cell growth at high temperatures. Can use free sulfide as sulfur source in vitro. The protein is tRNA-5-methyluridine(54) 2-sulfurtransferase of Thermotoga maritima (strain ATCC 43589 / DSM 3109 / JCM 10099 / NBRC 100826 / MSB8).